The primary structure comprises 207 residues: Large ribosomal subunit protein uL4 (207 aa).

A disordered region spans residues 48 to 85 (THKVKNRSEVRGGGRKPWRQKGTGRARQGSIRSPQWRG). Basic residues predominate over residues 60–71 (GGRKPWRQKGTG).

The protein belongs to the universal ribosomal protein uL4 family. In terms of assembly, part of the 50S ribosomal subunit.

Its function is as follows. One of the primary rRNA binding proteins, this protein initially binds near the 5'-end of the 23S rRNA. It is important during the early stages of 50S assembly. It makes multiple contacts with different domains of the 23S rRNA in the assembled 50S subunit and ribosome. In terms of biological role, forms part of the polypeptide exit tunnel. The polypeptide is Large ribosomal subunit protein uL4 (Bacillus subtilis (strain 168)).